We begin with the raw amino-acid sequence, 50 residues long: MTDSIDKSGRGVNECKRCGRKQGLVRKYDIYLCRHCFREIAHEMGFEKYS.

Cys15, Cys18, Cys33, and Cys36 together coordinate Zn(2+).

The protein belongs to the universal ribosomal protein uS14 family. Zinc-binding uS14 subfamily. As to quaternary structure, part of the 30S ribosomal subunit. Zn(2+) serves as cofactor.

Functionally, binds 16S rRNA, required for the assembly of 30S particles. The protein is Small ribosomal subunit protein uS14 of Methanosarcina mazei (strain ATCC BAA-159 / DSM 3647 / Goe1 / Go1 / JCM 11833 / OCM 88) (Methanosarcina frisia).